Reading from the N-terminus, the 380-residue chain is Glucose-1-phosphate adenylyltransferase (380 aa).

Alpha-D-glucose 1-phosphate-binding positions include glycine 164, glutamate 179–lysine 180, and serine 190.

It belongs to the bacterial/plant glucose-1-phosphate adenylyltransferase family. Homotetramer.

The enzyme catalyses alpha-D-glucose 1-phosphate + ATP + H(+) = ADP-alpha-D-glucose + diphosphate. It functions in the pathway glycan biosynthesis; glycogen biosynthesis. Its function is as follows. Involved in the biosynthesis of ADP-glucose, a building block required for the elongation reactions to produce glycogen. Catalyzes the reaction between ATP and alpha-D-glucose 1-phosphate (G1P) to produce pyrophosphate and ADP-Glc. The protein is Glucose-1-phosphate adenylyltransferase of Lactococcus lactis subsp. cremoris (strain MG1363).